Consider the following 247-residue polypeptide: Probable dihydroorotate dehydrogenase B (NAD(+)), electron transfer subunit (247 aa).

The FAD-binding FR-type domain maps to 1–87; the sequence is MLRRVTLKET…RGPYGNGFKE (87 aa). 4 residues coordinate [2Fe-2S] cluster: cysteine 200, cysteine 205, cysteine 208, and cysteine 216.

It belongs to the PyrK family. Heterotetramer of 2 PyrK and 2 PyrD type B subunits. The cofactor is [2Fe-2S] cluster. FAD serves as cofactor.

It participates in pyrimidine metabolism; UMP biosynthesis via de novo pathway; orotate from (S)-dihydroorotate (NAD(+) route): step 1/1. Functionally, responsible for channeling the electrons from the oxidation of dihydroorotate from the FMN redox center in the PyrD type B subunit to the ultimate electron acceptor NAD(+). The polypeptide is Probable dihydroorotate dehydrogenase B (NAD(+)), electron transfer subunit (Pyrococcus horikoshii (strain ATCC 700860 / DSM 12428 / JCM 9974 / NBRC 100139 / OT-3)).